The chain runs to 398 residues: Acetate kinase (398 aa).

Asn7 is a binding site for Mg(2+). Lys14 provides a ligand contact to ATP. Arg91 is a binding site for substrate. Residue Asp148 is the Proton donor/acceptor of the active site. ATP-binding positions include 208 to 212 (HIGNG), 283 to 285 (DMR), and 331 to 335 (GVGEN). Glu384 contacts Mg(2+).

It belongs to the acetokinase family. As to quaternary structure, homodimer. Mg(2+) is required as a cofactor. The cofactor is Mn(2+).

It is found in the cytoplasm. It carries out the reaction acetate + ATP = acetyl phosphate + ADP. The protein operates within metabolic intermediate biosynthesis; acetyl-CoA biosynthesis; acetyl-CoA from acetate: step 1/2. Catalyzes the formation of acetyl phosphate from acetate and ATP. Can also catalyze the reverse reaction. This is Acetate kinase from Bacteroides fragilis (strain ATCC 25285 / DSM 2151 / CCUG 4856 / JCM 11019 / LMG 10263 / NCTC 9343 / Onslow / VPI 2553 / EN-2).